Reading from the N-terminus, the 75-residue chain is MSKPCISEEDFKDCQAFFAKPLPILVAEISKSLANIDFVDTASQQVDQLGIFLDLIGTECFKEVLCPHTSANLTN.

This sequence belongs to the herpesviridae UL91 family.

This is an uncharacterized protein from Saimiriine herpesvirus 2 (strain 11) (SaHV-2).